The chain runs to 74 residues: Homeobox protein Hox-B8 (74 aa).

Low complexity predominate over residues 1–24 (YTDCKLAASGLGEEAESSEQSPSP). The segment at 1–28 (YTDCKLAASGLGEEAESSEQSPSPTQLF) is disordered. The Antp-type hexapeptide signature appears at 27–32 (LFPWMR). The segment at residues 39–74 (RRRGRQTYSRYQTLELEKEFLFNPYLTRKRRIEVSR) is a DNA-binding region (homeobox).

It belongs to the Antp homeobox family.

The protein resides in the nucleus. Its function is as follows. Sequence-specific transcription factor which is part of a developmental regulatory system that provides cells with specific positional identities on the anterior-posterior axis. This Gallus gallus (Chicken) protein is Homeobox protein Hox-B8 (HOXB8).